The following is a 262-amino-acid chain: Ribosomal RNA small subunit methyltransferase A (262 aa).

6 residues coordinate S-adenosyl-L-methionine: His-13, Leu-15, Gly-40, Glu-61, Asp-85, and Asn-103.

This sequence belongs to the class I-like SAM-binding methyltransferase superfamily. rRNA adenine N(6)-methyltransferase family. RsmA subfamily.

It is found in the cytoplasm. It carries out the reaction adenosine(1518)/adenosine(1519) in 16S rRNA + 4 S-adenosyl-L-methionine = N(6)-dimethyladenosine(1518)/N(6)-dimethyladenosine(1519) in 16S rRNA + 4 S-adenosyl-L-homocysteine + 4 H(+). In terms of biological role, specifically dimethylates two adjacent adenosines (A1518 and A1519) in the loop of a conserved hairpin near the 3'-end of 16S rRNA in the 30S particle. May play a critical role in biogenesis of 30S subunits. This chain is Ribosomal RNA small subunit methyltransferase A, found in Bordetella avium (strain 197N).